Here is a 252-residue protein sequence, read N- to C-terminus: tRNA (guanine-N(1)-)-methyltransferase (252 aa).

S-adenosyl-L-methionine contacts are provided by residues Gly113 and 133-138 (IGDYVL).

It belongs to the RNA methyltransferase TrmD family. As to quaternary structure, homodimer.

Its subcellular location is the cytoplasm. It catalyses the reaction guanosine(37) in tRNA + S-adenosyl-L-methionine = N(1)-methylguanosine(37) in tRNA + S-adenosyl-L-homocysteine + H(+). Functionally, specifically methylates guanosine-37 in various tRNAs. This Xanthomonas campestris pv. campestris (strain B100) protein is tRNA (guanine-N(1)-)-methyltransferase.